A 244-amino-acid polypeptide reads, in one-letter code: Small ribosomal subunit protein uS3 (244 aa).

Residues 39–107 (VREMLRKKLA…PAHINVTEVR (69 aa)) enclose the KH type-2 domain. Residues 213–244 (VGQEKQDDSPRNDRNDRGDRGDRPSRPAREAR) form a disordered region. A compositionally biased stretch (basic and acidic residues) spans 216–244 (EKQDDSPRNDRNDRGDRGDRPSRPAREAR).

Belongs to the universal ribosomal protein uS3 family. In terms of assembly, part of the 30S ribosomal subunit. Forms a tight complex with proteins S10 and S14.

Its function is as follows. Binds the lower part of the 30S subunit head. Binds mRNA in the 70S ribosome, positioning it for translation. This Xanthomonas oryzae pv. oryzae (strain MAFF 311018) protein is Small ribosomal subunit protein uS3.